Here is a 1164-residue protein sequence, read N- to C-terminus: Hamartin (1164 aa).

A Glycyl lysine isopeptide (Lys-Gly) (interchain with G-Cter in ubiquitin) cross-link involves residue Lys-30. The tract at residues 403-787 (SDDYVHISLP…QIRQLQHDRE (385 aa)) is mediates interaction with WDR45B. Residues 439–571 (LNDRGSEEPP…ADESPAGDRE (133 aa)) are disordered. Over residues 474–487 (EKDKEEAAISRELS) the composition is skewed to basic and acidic residues. Residues Ser-487, Ser-505, Ser-511, Ser-521, and Ser-598 each carry the phosphoserine modification. The segment covering 513–530 (PGSQRKTHSAASSSQGAS) has biased composition (polar residues). Positions 721 to 997 (RKVIKAAALE…AAEERLDCCN (277 aa)) form a coiled coil. The disordered stretch occupies residues 1006-1085 (GHNEEASGHN…TTVGSLPSSK (80 aa)). Over residues 1007–1020 (HNEEASGHNGETKT) the composition is skewed to basic and acidic residues. Polar residues predominate over residues 1073-1085 (SIPTTVGSLPSSK). Ser-1100 is modified (phosphoserine). Residues 1131-1164 (IPLNLDGPHPSPPTPDSVGQLHIMDYNETHHEHS) are disordered. Residues 1155–1164 (DYNETHHEHS) are compositionally biased toward basic and acidic residues.

Component of the TSC-TBC complex (also named Rhebulator complex), composed of 2 molecules of TSC1, 2 molecules of TSC2 and 1 molecule of TBC1D7. Probably forms a complex composed of chaperones HSP90 and HSP70, co-chaperones STIP1/HOP, CDC37, PPP5C, PTGES3/p23, TSC1 and client protein TSC2. Forms a complex composed of chaperones HSP90 and HSP70, co-chaperones CDC37, PPP5C, TSC1 and client protein TSC2, CDK4, AKT, RAF1 and NR3C1; this complex does not contain co-chaperones STIP1/HOP and PTGES3/p23. Forms a complex containing HSP90AA1, TSC1 and TSC2; TSC1 is required to recruit TCS2 to the complex. Interacts (via C-terminus) with the closed form of HSP90AA1 (via the middle domain and TPR repeat-binding motif). Interacts with DOCK7. Interacts with FBXW5. Interacts with WDR45B. Interacts with RPAP3 and URI1. Post-translationally, phosphorylation at Ser-505 does not affect interaction with TSC2. 'Lys-63'-linked ubiquitinated at Lys-30 by PELI1; the ubiquitination promotes TSC1/TSC2 complex stability. In terms of tissue distribution, highly expressed in skeletal muscle, followed by heart, brain, placenta, pancreas, lung, liver and kidney. Also expressed in embryonic kidney cells.

It localises to the lysosome membrane. It is found in the cytoplasm. The protein localises to the cytosol. Non-catalytic component of the TSC-TBC complex, a multiprotein complex that acts as a negative regulator of the canonical mTORC1 complex, an evolutionarily conserved central nutrient sensor that stimulates anabolic reactions and macromolecule biosynthesis to promote cellular biomass generation and growth. The TSC-TBC complex acts as a GTPase-activating protein (GAP) for the small GTPase RHEB, a direct activator of the protein kinase activity of mTORC1. In absence of nutrients, the TSC-TBC complex inhibits mTORC1, thereby preventing phosphorylation of ribosomal protein S6 kinase (RPS6KB1 and RPS6KB2) and EIF4EBP1 (4E-BP1) by the mTORC1 signaling. The TSC-TBC complex is inactivated in response to nutrients, relieving inhibition of mTORC1. Within the TSC-TBC complex, TSC1 stabilizes TSC2 and prevents TSC2 self-aggregation. Acts as a tumor suppressor. Involved in microtubule-mediated protein transport via its ability to regulate mTORC1 signaling. Also acts as a co-chaperone for HSP90AA1 facilitating HSP90AA1 chaperoning of protein clients such as kinases, TSC2 and glucocorticoid receptor NR3C1. Increases ATP binding to HSP90AA1 and inhibits HSP90AA1 ATPase activity. Competes with the activating co-chaperone AHSA1 for binding to HSP90AA1, thereby providing a reciprocal regulatory mechanism for chaperoning of client proteins. Recruits TSC2 to HSP90AA1 and stabilizes TSC2 by preventing the interaction between TSC2 and ubiquitin ligase HERC1. This Homo sapiens (Human) protein is Hamartin.